The sequence spans 120 residues: Cell cycle protein GpsB (120 aa).

Residues 32–68 (LDDIIKDYETYAALVKELREENRRLKEELAAKPVEKA) adopt a coiled-coil conformation. The interval 63–88 (KPVEKAPVQPTQPVQSTQATQSTVES) is disordered. The span at 68–86 (APVQPTQPVQSTQATQSTV) shows a compositional bias: low complexity.

This sequence belongs to the GpsB family. Forms polymers through the coiled coil domains. Interacts with PBP1, MreC and EzrA.

Its subcellular location is the cytoplasm. In terms of biological role, divisome component that associates with the complex late in its assembly, after the Z-ring is formed, and is dependent on DivIC and PBP2B for its recruitment to the divisome. Together with EzrA, is a key component of the system that regulates PBP1 localization during cell cycle progression. Its main role could be the removal of PBP1 from the cell pole after pole maturation is completed. Also contributes to the recruitment of PBP1 to the division complex. Not essential for septum formation. In Streptococcus sanguinis (strain SK36), this protein is Cell cycle protein GpsB.